Consider the following 203-residue polypeptide: MNAHQANPPGESLAALLGRLGSRSIVFVGLMGAGKTAIGRKVATMLSLPFIDSDQEIESVSRMTVPELFERYGEAEFRALEQRVILRVLENGPQVLSTGGGAFMNAQTREAIAGHGVSVWLKAELDLLMDRVSKKQNRPLLKSADPRAVLERLMSERYPVYATSDVTVPTRDDRKEVIAAEVLNALCRHFGIDEIAATGEIES.

32–37 (GAGKTA) contributes to the ATP binding site. Residue Thr36 participates in Mg(2+) binding. Residues Asp54, Arg78, and Gly100 each coordinate substrate. Arg138 provides a ligand contact to ATP. Arg157 is a substrate binding site.

It belongs to the shikimate kinase family. In terms of assembly, monomer. Mg(2+) serves as cofactor.

The protein resides in the cytoplasm. The catalysed reaction is shikimate + ATP = 3-phosphoshikimate + ADP + H(+). The protein operates within metabolic intermediate biosynthesis; chorismate biosynthesis; chorismate from D-erythrose 4-phosphate and phosphoenolpyruvate: step 5/7. Its function is as follows. Catalyzes the specific phosphorylation of the 3-hydroxyl group of shikimic acid using ATP as a cosubstrate. The sequence is that of Shikimate kinase from Mesorhizobium japonicum (strain LMG 29417 / CECT 9101 / MAFF 303099) (Mesorhizobium loti (strain MAFF 303099)).